Consider the following 825-residue polypeptide: Exocyst complex component SEC10a (825 aa).

Residues 244-266 are a coiled coil; that stretch reads RGLEVAVANLQDYCNELENRLLS.

It belongs to the SEC10 family. In terms of assembly, the exocyst complex is composed of SEC3, SEC5, SEC6, SEC8, SEC10, EXO70A1 and EXO84B. Interacts with EXO84B. Binds to EXO70E2. Binds directly to B1L. Expressed in seedlings, roots, leaves and flowers.

The protein resides in the cytoplasm. It is found in the cytosol. Its subcellular location is the secreted. It localises to the extracellular exosome. Its function is as follows. Component of the exocyst complex involved in the docking of exocytic vesicles with fusion sites on the plasma membrane during regulated or polarized secretion. Involved in polarized cell growth and organ morphogenesis. During cytokinesis, involved in cell plate initiation, cell plate maturation and formation of new primary cell wall. The sequence is that of Exocyst complex component SEC10a from Arabidopsis thaliana (Mouse-ear cress).